Reading from the N-terminus, the 132-residue chain is Small ribosomal subunit protein uS11 (132 aa).

It belongs to the universal ribosomal protein uS11 family. As to quaternary structure, part of the 30S ribosomal subunit. Interacts with proteins S7 and S18. Binds to IF-3.

Located on the platform of the 30S subunit, it bridges several disparate RNA helices of the 16S rRNA. Forms part of the Shine-Dalgarno cleft in the 70S ribosome. The chain is Small ribosomal subunit protein uS11 from Chlamydia trachomatis serovar D (strain ATCC VR-885 / DSM 19411 / UW-3/Cx).